Consider the following 316-residue polypeptide: Porphobilinogen deaminase (316 aa).

Residue Cys-249 is modified to S-(dipyrrolylmethanemethyl)cysteine.

This sequence belongs to the HMBS family. In terms of assembly, monomer. Dipyrromethane is required as a cofactor.

The catalysed reaction is 4 porphobilinogen + H2O = hydroxymethylbilane + 4 NH4(+). It functions in the pathway porphyrin-containing compound metabolism; protoporphyrin-IX biosynthesis; coproporphyrinogen-III from 5-aminolevulinate: step 2/4. Functionally, tetrapolymerization of the monopyrrole PBG into the hydroxymethylbilane pre-uroporphyrinogen in several discrete steps. The polypeptide is Porphobilinogen deaminase (Nitrobacter hamburgensis (strain DSM 10229 / NCIMB 13809 / X14)).